The sequence spans 506 residues: UBX domain-containing protein 4 (506 aa).

The tract at residues 1-199 (MLWFQGAIPA…PAEDLTVRVE (199 aa)) is interaction with UBQLN1. Over 1–411 (MLWFQGAIPA…VHSSSGDIWT (411 aa)) the chain is Cytoplasmic. A disordered region spans residues 110 to 194 (QQMHSSKGEA…CSNQRPAEDL (85 aa)). Polar residues-rich tracts occupy residues 120–136 (SVTN…TPSA) and 153–167 (LCET…SDTA). In terms of domain architecture, UBX spans 313-391 (DRSTIARIQF…ELAPSASVVL (79 aa)). An intramembrane segment occupies 412–432 (LLGTVLYPFLAIWRLISNFLF). Residues 433–506 (SNPPPAQTSA…TWNGNSTQQM (74 aa)) are Cytoplasmic-facing. The tract at residues 437–506 (PAQTSARATS…TWNGNSTQQM (70 aa)) is disordered. The span at 444 to 456 (ATSTEPSNSASSS) shows a compositional bias: low complexity. The segment covering 457 to 489 (KSEKREPVRKRMLEKRGEDFKKEGKIYRLRTQD) has biased composition (basic and acidic residues). Position 487 is a phosphothreonine (Thr487). Residues 496–506 (NTWNGNSTQQM) show a composition bias toward polar residues.

In terms of assembly, directly interacts with VCP. Interacts with UBQLN1. Forms a complex with VCP and UBQLN1. As to expression, expressed in many tissues, including brain, heart, kidney, liver, muscle and spleen (at protein level).

It localises to the endoplasmic reticulum membrane. The protein resides in the nucleus envelope. Its function is as follows. Involved in endoplasmic reticulum-associated protein degradation (ERAD). Acts as a platform to recruit both UBQLN1 and VCP to the ER during ERAD. The polypeptide is UBX domain-containing protein 4 (Ubxn4) (Mus musculus (Mouse)).